Here is a 304-residue protein sequence, read N- to C-terminus: Acetyl-coenzyme A carboxylase carboxyl transferase subunit beta (304 aa).

In terms of domain architecture, CoA carboxyltransferase N-terminal spans 52–304 (EVTKCPSCGV…TIFKVLNDII (253 aa)). Residues C56, C59, C75, and C78 each coordinate Zn(2+). Residues 56–78 (CPSCGVLSHKSEIRANMKMCSNC) form a C4-type zinc finger.

This sequence belongs to the AccD/PCCB family. Acetyl-CoA carboxylase is a heterohexamer composed of biotin carboxyl carrier protein (AccB), biotin carboxylase (AccC) and two subunits each of ACCase subunit alpha (AccA) and ACCase subunit beta (AccD). It depends on Zn(2+) as a cofactor.

Its subcellular location is the cytoplasm. The enzyme catalyses N(6)-carboxybiotinyl-L-lysyl-[protein] + acetyl-CoA = N(6)-biotinyl-L-lysyl-[protein] + malonyl-CoA. Its pathway is lipid metabolism; malonyl-CoA biosynthesis; malonyl-CoA from acetyl-CoA: step 1/1. Its function is as follows. Component of the acetyl coenzyme A carboxylase (ACC) complex. Biotin carboxylase (BC) catalyzes the carboxylation of biotin on its carrier protein (BCCP) and then the CO(2) group is transferred by the transcarboxylase to acetyl-CoA to form malonyl-CoA. The sequence is that of Acetyl-coenzyme A carboxylase carboxyl transferase subunit beta from Fusobacterium nucleatum subsp. nucleatum (strain ATCC 25586 / DSM 15643 / BCRC 10681 / CIP 101130 / JCM 8532 / KCTC 2640 / LMG 13131 / VPI 4355).